Here is a 562-residue protein sequence, read N- to C-terminus: Putative transport protein Spro_1639 (562 aa).

Helical transmembrane passes span 8 to 28, 37 to 57, 66 to 86, 94 to 114, and 158 to 178; these read LLNG…LCLG, LGNS…HFAI, FMLF…SIFF, MLAL…GKLF, and HLSL…IFGA. RCK C-terminal domains lie at 202–288 and 290–373; these read LDTD…SFRN and KEVF…KIGF. 5 consecutive transmembrane segments (helical) span residues 383–403, 406–426, 447–467, 475–495, and 541–561; these read LLAF…TIQF, FSFG…LGFL, FGLM…IGNS, MLIA…LFGA, and IANV…PGIL.

Belongs to the AAE transporter (TC 2.A.81) family. YbjL subfamily.

It is found in the cell membrane. The protein is Putative transport protein Spro_1639 of Serratia proteamaculans (strain 568).